The chain runs to 70 residues: Large ribosomal subunit protein bL31 (70 aa).

4 residues coordinate Zn(2+): C16, C18, C37, and C40.

The protein belongs to the bacterial ribosomal protein bL31 family. Type A subfamily. In terms of assembly, part of the 50S ribosomal subunit. The cofactor is Zn(2+).

In terms of biological role, binds the 23S rRNA. This chain is Large ribosomal subunit protein bL31, found in Shewanella sp. (strain MR-4).